The chain runs to 229 residues: Ribonuclease HII (229 aa).

Positions 34 to 223 constitute an RNase H type-2 domain; the sequence is WPVAGADEAG…LRKTENGPET (190 aa). A divalent metal cation is bound by residues Asp-40, Glu-41, and Asp-131. Residues 209-229 are disordered; that stretch reads MSFRPLRKTENGPETDELLSE.

This sequence belongs to the RNase HII family. It depends on Mn(2+) as a cofactor. Requires Mg(2+) as cofactor.

Its subcellular location is the cytoplasm. It catalyses the reaction Endonucleolytic cleavage to 5'-phosphomonoester.. Functionally, endonuclease that specifically degrades the RNA of RNA-DNA hybrids. The protein is Ribonuclease HII of Rhizobium johnstonii (strain DSM 114642 / LMG 32736 / 3841) (Rhizobium leguminosarum bv. viciae).